Reading from the N-terminus, the 37-residue chain is Potassium channel toxin alpha-KTx 4.8 (37 aa).

Disulfide bonds link C13-C33 and C17-C35.

Belongs to the short scorpion toxin superfamily. Potassium channel inhibitor family. Alpha-KTx 04 subfamily. In terms of tissue distribution, expressed by the venom gland.

It localises to the secreted. In terms of biological role, reversible blocker of voltage-gated potassium channel Kv1.2/KCNA2 (Kd=65 nM) and calcium-activated potassium channels KCa2.2/KCNN2 (Kd=575 nM) and KCa3.1/KCNN4 (Kd=59 nM). The protein is Potassium channel toxin alpha-KTx 4.8 of Centruroides margaritatus (Central American bark Scorpion).